The chain runs to 37 residues: Potassium channel toxin alpha-KTx 3.13 (37 aa).

Cystine bridges form between cysteine 7–cysteine 27, cysteine 13–cysteine 32, and cysteine 17–cysteine 34. At lysine 37 the chain carries Lysine amide.

This sequence belongs to the short scorpion toxin superfamily. Potassium channel inhibitor family. Alpha-KTx 03 subfamily. As to expression, expressed by the venom gland.

It localises to the secreted. Blocks voltage-gated potassium channels Kv1.1/KCNA1 (IC(50)=203.15 pM), Kv1.2/KCNA2 (IC(50)=8.92 nM) from rat and human Kv1.3 KCNA3/KCNA3 (IC(50)=171 pM) potently. At 2 uM, also blocks Shaker IR and has a moderate effect on rat Kv1.6/KCNA6. The chain is Potassium channel toxin alpha-KTx 3.13 from Mesobuthus eupeus (Lesser Asian scorpion).